Here is a 488-residue protein sequence, read N- to C-terminus: Protein nucleotidyltransferase YdiU (488 aa).

Glycine 90, glycine 92, arginine 93, lysine 113, aspartate 125, glycine 126, arginine 176, and arginine 183 together coordinate ATP. The Proton acceptor role is filled by aspartate 252. Residues asparagine 253 and aspartate 262 each coordinate Mg(2+). Residue aspartate 262 participates in ATP binding.

It belongs to the SELO family. The cofactor is Mg(2+). It depends on Mn(2+) as a cofactor.

The enzyme catalyses L-seryl-[protein] + ATP = 3-O-(5'-adenylyl)-L-seryl-[protein] + diphosphate. It carries out the reaction L-threonyl-[protein] + ATP = 3-O-(5'-adenylyl)-L-threonyl-[protein] + diphosphate. The catalysed reaction is L-tyrosyl-[protein] + ATP = O-(5'-adenylyl)-L-tyrosyl-[protein] + diphosphate. It catalyses the reaction L-histidyl-[protein] + UTP = N(tele)-(5'-uridylyl)-L-histidyl-[protein] + diphosphate. The enzyme catalyses L-seryl-[protein] + UTP = O-(5'-uridylyl)-L-seryl-[protein] + diphosphate. It carries out the reaction L-tyrosyl-[protein] + UTP = O-(5'-uridylyl)-L-tyrosyl-[protein] + diphosphate. Its function is as follows. Nucleotidyltransferase involved in the post-translational modification of proteins. It can catalyze the addition of adenosine monophosphate (AMP) or uridine monophosphate (UMP) to a protein, resulting in modifications known as AMPylation and UMPylation. This chain is Protein nucleotidyltransferase YdiU, found in Thiobacillus denitrificans (strain ATCC 25259 / T1).